The chain runs to 121 residues: Putative inactive aspartokinase 3 HI_1632 (121 aa).

The protein belongs to the aspartokinase family.

The protein is Putative inactive aspartokinase 3 HI_1632 of Haemophilus influenzae (strain ATCC 51907 / DSM 11121 / KW20 / Rd).